A 492-amino-acid chain; its full sequence is 3-octaprenyl-4-hydroxybenzoate carboxy-lyase (492 aa).

N172 lines the Mn(2+) pocket. Residues I175 to R177, R189 to L191, and R194 to G195 each bind prenylated FMN. E238 contacts Mn(2+). The active-site Proton donor is D287.

It belongs to the UbiD family. Homohexamer. It depends on prenylated FMN as a cofactor. Requires Mn(2+) as cofactor.

It is found in the cell membrane. It catalyses the reaction a 4-hydroxy-3-(all-trans-polyprenyl)benzoate + H(+) = a 2-(all-trans-polyprenyl)phenol + CO2. It participates in cofactor biosynthesis; ubiquinone biosynthesis. In terms of biological role, catalyzes the decarboxylation of 3-octaprenyl-4-hydroxy benzoate to 2-octaprenylphenol, an intermediate step in ubiquinone biosynthesis. This Pasteurella multocida (strain Pm70) protein is 3-octaprenyl-4-hydroxybenzoate carboxy-lyase.